Here is a 111-residue protein sequence, read N- to C-terminus: Large ribosomal subunit protein uL22 (111 aa).

It belongs to the universal ribosomal protein uL22 family. As to quaternary structure, part of the 50S ribosomal subunit.

This protein binds specifically to 23S rRNA; its binding is stimulated by other ribosomal proteins, e.g. L4, L17, and L20. It is important during the early stages of 50S assembly. It makes multiple contacts with different domains of the 23S rRNA in the assembled 50S subunit and ribosome. In terms of biological role, the globular domain of the protein is located near the polypeptide exit tunnel on the outside of the subunit, while an extended beta-hairpin is found that lines the wall of the exit tunnel in the center of the 70S ribosome. This is Large ribosomal subunit protein uL22 from Geotalea daltonii (strain DSM 22248 / JCM 15807 / FRC-32) (Geobacter daltonii).